Here is a 126-residue protein sequence, read N- to C-terminus: MRHRLANRKLNRTSSHRLAMLRNLANSLLRHEQIVTTLPKAKELRRVAEPLITLGKKPSLANRRLAFDRTRDREIVVKLFDELGPRFANRNGGYLRILKYGFRQGDNAPMALVELVERPEVEAAAE.

Belongs to the bacterial ribosomal protein bL17 family. As to quaternary structure, part of the 50S ribosomal subunit. Contacts protein L32.

The protein is Large ribosomal subunit protein bL17 of Laribacter hongkongensis (strain HLHK9).